The following is a 330-amino-acid chain: tRNA U34 carboxymethyltransferase (330 aa).

Carboxy-S-adenosyl-L-methionine-binding positions include Lys-91, Trp-105, Lys-110, Gly-130, 152 to 154 (DPS), 181 to 182 (IE), Met-196, Tyr-200, and Arg-315.

It belongs to the class I-like SAM-binding methyltransferase superfamily. CmoB family. As to quaternary structure, homotetramer.

It catalyses the reaction carboxy-S-adenosyl-L-methionine + 5-hydroxyuridine(34) in tRNA = 5-carboxymethoxyuridine(34) in tRNA + S-adenosyl-L-homocysteine + H(+). Functionally, catalyzes carboxymethyl transfer from carboxy-S-adenosyl-L-methionine (Cx-SAM) to 5-hydroxyuridine (ho5U) to form 5-carboxymethoxyuridine (cmo5U) at position 34 in tRNAs. This chain is tRNA U34 carboxymethyltransferase, found in Shewanella frigidimarina (strain NCIMB 400).